A 418-amino-acid polypeptide reads, in one-letter code: Mitochondrial distribution and morphology protein 10 (418 aa).

Belongs to the MDM10 family. Component of the ER-mitochondria encounter structure (ERMES) or MDM complex, composed of MMM1, MDM10, MDM12 and MDM34. Associates with the mitochondrial outer membrane sorting assembly machinery SAM(core) complex.

Its subcellular location is the mitochondrion outer membrane. Component of the ERMES/MDM complex, which serves as a molecular tether to connect the endoplasmic reticulum and mitochondria. Components of this complex are involved in the control of mitochondrial shape and protein biogenesis and may function in phospholipid exchange. MDM10 is involved in the late assembly steps of the general translocase of the mitochondrial outer membrane (TOM complex). Functions in the TOM40-specific route of the assembly of outer membrane beta-barrel proteins, including the association of TOM40 with the receptor TOM22 and small TOM proteins. Can associate with the SAM(core) complex as well as the MDM12-MMM1 complex, both involved in late steps of the major beta-barrel assembly pathway, that is responsible for biogenesis of all outer membrane beta-barrel proteins. May act as a switch that shuttles between both complexes and channels precursor proteins into the TOM40-specific pathway. Plays a role in mitochondrial morphology and in the inheritance of mitochondria. This is Mitochondrial distribution and morphology protein 10 from Meyerozyma guilliermondii (strain ATCC 6260 / CBS 566 / DSM 6381 / JCM 1539 / NBRC 10279 / NRRL Y-324) (Yeast).